The following is a 164-amino-acid chain: MKARGRAWKYGDNIDTDVIIPARYLNTSDPKELAQHVLEDLDPEFRYKMKPGDIIVAGENFGCGSSREHAPLAIKAAGVSAVIAKSFARIFYRNAINIGLPILEAPEAVERIETGDEIEIDFSTGEIRNLTKGEVYHANPFPEFIMEIIKAGGLVEWAKRRLAK.

Belongs to the LeuD family. LeuD type 2 subfamily. As to quaternary structure, heterodimer of LeuC and LeuD.

It catalyses the reaction (2R,3S)-3-isopropylmalate = (2S)-2-isopropylmalate. It participates in amino-acid biosynthesis; L-leucine biosynthesis; L-leucine from 3-methyl-2-oxobutanoate: step 2/4. Catalyzes the isomerization between 2-isopropylmalate and 3-isopropylmalate, via the formation of 2-isopropylmaleate. The sequence is that of 3-isopropylmalate dehydratase small subunit 1 (leuD1) from Pyrococcus furiosus (strain ATCC 43587 / DSM 3638 / JCM 8422 / Vc1).